The primary structure comprises 74 residues: UPF0291 protein lmo0496 (74 aa).

It belongs to the UPF0291 family.

The protein resides in the cytoplasm. The protein is UPF0291 protein lmo0496 of Listeria monocytogenes serovar 1/2a (strain ATCC BAA-679 / EGD-e).